A 492-amino-acid chain; its full sequence is GTPase Der (492 aa).

2 consecutive EngA-type G domains span residues 3–167 (FTLA…EKFE) and 207–382 (LQVA…DVWN). Residues 9–16 (GRPNVGKS), 56–60 (DSAGL), 119–122 (NKSE), 213–220 (GRPNAGKS), 260–264 (DTAGM), and 325–328 (NKWD) contribute to the GTP site. The region spanning 383–469 (RRVPTAALNR…RLTLRGQGDK (87 aa)) is the KH-like domain. The disordered stretch occupies residues 461–492 (LTLRGQGDKNPYKGKKKSTPSRLRKHLEGRKS). Positions 472–492 (YKGKKKSTPSRLRKHLEGRKS) are enriched in basic residues.

This sequence belongs to the TRAFAC class TrmE-Era-EngA-EngB-Septin-like GTPase superfamily. EngA (Der) GTPase family. As to quaternary structure, associates with the 50S ribosomal subunit.

Functionally, GTPase that plays an essential role in the late steps of ribosome biogenesis. The chain is GTPase Der from Ruegeria sp. (strain TM1040) (Silicibacter sp.).